Consider the following 578-residue polypeptide: Vesicular acetylcholine transporter (578 aa).

The Cytoplasmic portion of the chain corresponds to Met-1 to Arg-32. Residues Leu-33–Val-53 form a helical membrane-spanning segment. The Lumenal, vesicle segment spans residues Pro-54 to Gly-98. N-linked (GlcNAc...) asparagine glycosylation is present at Asn-78. The helical transmembrane segment at Ile-99–Ile-119 threads the bilayer. Topologically, residues Asp-120–Asp-125 are cytoplasmic. A helical transmembrane segment spans residues Leu-126–Ser-146. Residues Ser-147 to Ala-154 are Lumenal, vesicle-facing. The helical transmembrane segment at Arg-155 to Asp-175 threads the bilayer. Residues Arg-176–Leu-187 lie on the Cytoplasmic side of the membrane. Residues Gly-188–Leu-208 form a helical membrane-spanning segment. Topologically, residues Tyr-209–Glu-215 are lumenal, vesicle. A helical transmembrane segment spans residues Val-216–Met-236. Topologically, residues Lys-237–Pro-263 are cytoplasmic. The helical transmembrane segment at Tyr-264 to Pro-284 threads the bilayer. At Thr-285–Trp-299 the chain is on the lumenal, vesicle side. N-linked (GlcNAc...) asparagine glycosylation occurs at Asn-293. Residues Lys-300–Val-320 form a helical membrane-spanning segment. The Cytoplasmic segment spans residues Lys-321 to Gln-330. Residues Trp-331–Cys-351 traverse the membrane as a helical segment. Residues Ser-352 to Lys-355 lie on the Lumenal, vesicle side of the membrane. The chain crosses the membrane as a helical span at residues Met-356–Leu-376. The Cytoplasmic portion of the chain corresponds to Pro-377–Tyr-387. A helical membrane pass occupies residues Val-388–Val-408. At Gly-409–Ala-413 the chain is on the lumenal, vesicle side. Residues Gly-414–Leu-434 traverse the membrane as a helical segment. Over Ala-435–Phe-578 the chain is Cytoplasmic. Composition is skewed to low complexity over residues Glu-507–Gly-534 and Gln-549–Gln-563. Residues Glu-507–Phe-578 are disordered.

The protein belongs to the major facilitator superfamily. Vesicular transporter family.

It localises to the membrane. In terms of biological role, involved in acetylcholine transport into synaptic vesicles. The sequence is that of Vesicular acetylcholine transporter (VAChT) from Drosophila melanogaster (Fruit fly).